We begin with the raw amino-acid sequence, 1272 residues long: AF4/FMR2 family member 2 (1272 aa).

Disordered stretches follow at residues 93 to 183 (IPKN…LTQD) and 200 to 223 (PQIG…SSGE). Polar residues predominate over residues 97–107 (SVPQNPNNKNE). The span at 151 to 160 (SKPEWSRDSH) shows a compositional bias: basic and acidic residues. A compositionally biased stretch (polar residues) spans 161-183 (NPSTVLASQASGQPNKMQTLTQD). Positions 212–223 (AKEDSNPKSSGE) are enriched in basic and acidic residues. Ser-391 carries the post-translational modification Phosphoserine. Disordered regions lie at residues 418–491 (KAKP…KWQL), 535–687 (TNAS…DQEE), 779–829 (SLHA…PEKK), and 842–903 (PPCI…QDKN). Residues 426–438 (VNPPLATPQPPPA) are compositionally biased toward pro residues. Positions 439 to 452 (VQASGGSGSSSESE) are enriched in low complexity. At Thr-478 the chain carries Phosphothreonine. The span at 543-558 (EPKERPLLSLIREKAR) shows a compositional bias: basic and acidic residues. Polar residues predominate over residues 576–586 (STTSETVSQRT). The segment covering 616-629 (PKEKESVELHDPPR) has biased composition (basic and acidic residues). Positions 630 to 640 (GRNKATAHKPA) are enriched in basic residues. Residues 818-829 (PTEVAEKIPEKK) are compositionally biased toward basic and acidic residues. Pro residues-rich tracts occupy residues 844–853 (CISPAPPHKP) and 874–883 (FPPPLSPLPE).

It belongs to the AF4 family.

Its subcellular location is the nucleus speckle. RNA-binding protein. Might be involved in alternative splicing regulation through an interaction with G-quartet RNA structure. The sequence is that of AF4/FMR2 family member 2 (AFF2) from Pongo pygmaeus (Bornean orangutan).